The following is a 79-amino-acid chain: Serine protease inhibitor Kazal-type 1 (79 aa).

A signal peptide spans 1 to 18 (MKVAIIFLLSALALLSLA). The 54-residue stretch at 26–79 (NGKTPNCPKQIMGCPRIYDPVCGTNGITYPSECSLCFENRKFGTSIHIQRRGTC) folds into the Kazal-like domain. 3 cysteine pairs are disulfide-bonded: C32–C61, C39–C58, and C47–C79.

It is found in the secreted. Its function is as follows. Serine protease inhibitor which exhibits anti-trypsin activity. In the pancreas, protects against trypsin-catalyzed premature activation of zymogens. In the male reproductive tract, binds to sperm heads where it modulates sperm capacitance by inhibiting calcium uptake and nitrogen oxide (NO) production. This Rattus norvegicus (Rat) protein is Serine protease inhibitor Kazal-type 1.